The primary structure comprises 104 residues: A-type ATP synthase subunit F (104 aa).

This sequence belongs to the V-ATPase F subunit family. Has multiple subunits with at least A(3), B(3), C, D, E, F, H, I and proteolipid K(x).

It is found in the cell membrane. Functionally, component of the A-type ATP synthase that produces ATP from ADP in the presence of a proton gradient across the membrane. The polypeptide is A-type ATP synthase subunit F (Thermoplasma acidophilum (strain ATCC 25905 / DSM 1728 / JCM 9062 / NBRC 15155 / AMRC-C165)).